Here is a 244-residue protein sequence, read N- to C-terminus: Uridylate kinase (244 aa).

18–21 (KISG) lines the ATP pocket. The tract at residues 26–31 (GDQGYG) is involved in allosteric activation by GTP. Gly60 is a binding site for UMP. ATP-binding residues include Gly61 and Arg65. Residues Asp80 and 141–148 (TGNPYFTT) contribute to the UMP site. The ATP site is built by Thr168, Tyr174, and Asp177.

It belongs to the UMP kinase family. In terms of assembly, homohexamer.

Its subcellular location is the cytoplasm. The enzyme catalyses UMP + ATP = UDP + ADP. The protein operates within pyrimidine metabolism; CTP biosynthesis via de novo pathway; UDP from UMP (UMPK route): step 1/1. Allosterically activated by GTP. Inhibited by UTP. Functionally, catalyzes the reversible phosphorylation of UMP to UDP. In Paracoccus denitrificans (strain Pd 1222), this protein is Uridylate kinase.